A 411-amino-acid polypeptide reads, in one-letter code: Arginine deiminase (411 aa).

Catalysis depends on C399, which acts as the Amidino-cysteine intermediate.

It belongs to the arginine deiminase family.

It is found in the cytoplasm. The catalysed reaction is L-arginine + H2O = L-citrulline + NH4(+). The protein operates within amino-acid degradation; L-arginine degradation via ADI pathway; carbamoyl phosphate from L-arginine: step 1/2. This Latilactobacillus sakei subsp. sakei (strain 23K) (Lactobacillus sakei subsp. sakei) protein is Arginine deiminase.